Here is a 990-residue protein sequence, read N- to C-terminus: Presequence protease, mitochondrial (990 aa).

The N-terminal 56 residues, 1-56 (MLRFQRTVPRVAIRRLANVYSEGAVLHGYKVRRAQEIPEMRMAAVELEHEMTGARH), are a transit peptide targeting the mitochondrion. Position 84 (histidine 84) interacts with Zn(2+). The Proton acceptor role is filled by glutamate 87. Histidine 88 serves as a coordination point for Zn(2+). Residue glutamate 160 is part of the active site. Residue glutamate 185 participates in Zn(2+) binding.

It belongs to the peptidase M16 family. PreP subfamily. Monomer and homodimer; homodimerization is induced by binding of the substrate. Zn(2+) serves as cofactor.

Its subcellular location is the mitochondrion intermembrane space. It is found in the mitochondrion matrix. Functionally, degrades mitochondrial transit peptides after their cleavage in the intermembrane space or in the matrix, and presequence peptides; clearance of these peptides is required to keep the presequence processing machinery running. Preferentially cleaves the N-terminal side of paired basic amino acid residues. Also degrades other unstructured peptides. May function as an ATP-dependent peptidase as opposed to a metalloendopeptidase. The polypeptide is Presequence protease, mitochondrial (CYM1) (Eremothecium gossypii (strain ATCC 10895 / CBS 109.51 / FGSC 9923 / NRRL Y-1056) (Yeast)).